The chain runs to 410 residues: Acetate kinase (410 aa).

A Mg(2+)-binding site is contributed by Asn-7. Lys-14 provides a ligand contact to ATP. Substrate is bound at residue Arg-88. The Proton donor/acceptor role is filled by Asp-145. ATP contacts are provided by residues 203 to 207, 278 to 280, and 326 to 330; these read HAGNG, DTR, and GIGEN. Glu-379 contacts Mg(2+).

This sequence belongs to the acetokinase family. In terms of assembly, homodimer. It depends on Mg(2+) as a cofactor. The cofactor is Mn(2+).

The protein localises to the cytoplasm. It catalyses the reaction acetate + ATP = acetyl phosphate + ADP. The protein operates within metabolic intermediate biosynthesis; acetyl-CoA biosynthesis; acetyl-CoA from acetate: step 1/2. Its function is as follows. Catalyzes the formation of acetyl phosphate from acetate and ATP. Can also catalyze the reverse reaction. This is Acetate kinase from Chlorante-Aster yellows phytoplasma.